A 930-amino-acid chain; its full sequence is A disintegrin and metalloproteinase with thrombospondin motifs 5 (930 aa).

A signal peptide spans Met-1–Ser-21. Residues Leu-22 to Arg-261 constitute a propeptide that is removed on maturation. Residues Pro-31–Gly-53 show a composition bias toward low complexity. 2 disordered regions span residues Pro-31–Gln-68 and Ala-207–Arg-231. The Cysteine switch signature appears at Ala-207–Ser-214. Cys-209 contacts Zn(2+). Residues Thr-211–His-225 show a composition bias toward polar residues. One can recognise a Peptidase M12B domain in the interval Arg-267–Pro-476. Disulfide bonds link Cys-342-Cys-394, Cys-371-Cys-376, Cys-388-Cys-471, Cys-426-Cys-455, Cys-497-Cys-519, Cys-508-Cys-529, Cys-514-Cys-548, and Cys-542-Cys-553. His-410 is a Zn(2+) binding site. The active site involves Glu-411. Zn(2+)-binding residues include His-414 and His-420. A Disintegrin domain is found at Glu-485 to Ser-566. The N-linked (GlcNAc...) asparagine glycan is linked to Asn-498. One can recognise a TSP type-1 1 domain in the interval His-567–Pro-622. C-linked (Man) tryptophan glycans are attached at residues Trp-570 and Trp-573. 3 disulfide bridges follow: Cys-579–Cys-616, Cys-583–Cys-621, and Cys-594–Cys-606. Ser-582 carries O-linked (Fuc...) serine glycosylation. Residues Asn-728, Asn-802, and Asn-807 are each glycosylated (N-linked (GlcNAc...) asparagine). The tract at residues Thr-732–Ser-874 is spacer. One can recognise a TSP type-1 2 domain in the interval Thr-875–Lys-929.

It depends on Zn(2+) as a cofactor. Post-translationally, the precursor is cleaved by furin and PCSK7 outside of the cell. In terms of processing, glycosylated. Can be O-fucosylated by POFUT2 on a serine or a threonine residue found within the consensus sequence C1-X(2)-(S/T)-C2-G of the TSP type-1 repeat domains where C1 and C2 are the first and second cysteine residue of the repeat, respectively. Fucosylated repeats can then be further glycosylated by the addition of a beta-1,3-glucose residue by the glucosyltransferase, B3GALTL. Fucosylation mediates the efficient secretion of ADAMTS family members. Can also be C-glycosylated with one or two mannose molecules on tryptophan residues within the consensus sequence W-X-X-W of the TPRs, and N-glycosylated. These other glycosylations can also facilitate secretion. In terms of tissue distribution, expressed in skeletal muscle.

The protein localises to the secreted. Its subcellular location is the extracellular space. It localises to the extracellular matrix. Metalloproteinase that plays an important role in connective tissue organization, development, inflammation and cell migration. Extracellular matrix (ECM) degrading enzyme that shows proteolytic activity toward the hyalectan group of chondroitin sulfate proteoglycans (CSPGs) including ACAN, VCAN, BCAN and NCAN. Cleavage within the hyalectans occurs at Glu-Xaa recognition motifs. Plays a role in embryonic development, including limb and cardiac morphogenesis, and skeletal muscle development through its VCAN remodeling properties. Cleaves VCAN in the pericellular matrix surrounding myoblasts, facilitating myoblast contact and fusion which is required for skeletal muscle development and regeneration. Participates in the development of brown adipose tissue and browning of white adipose tissue. Plays an important role for T-lymphocyte migration from draining lymph nodes following viral infection. In Mus musculus (Mouse), this protein is A disintegrin and metalloproteinase with thrombospondin motifs 5 (Adamts5).